A 468-amino-acid polypeptide reads, in one-letter code: Dimethylamine methyltransferase MtbB1 (468 aa).

Residue Pyl356 is a non-standard amino acid, pyrrolysine.

The protein belongs to the dimethylamine methyltransferase family.

The catalysed reaction is Co(I)-[dimethylamine-specific corrinoid protein] + dimethylamine + H(+) = methyl-Co(III)-[dimethylamine-specific corrinoid protein] + methylamine. The protein operates within one-carbon metabolism; methanogenesis from dimethylamine. In terms of biological role, catalyzes the transfer of a methyl group from dimethylamine to the corrinoid cofactor of MtbC. The protein is Dimethylamine methyltransferase MtbB1 (mtbB1) of Methanosarcina mazei (strain ATCC BAA-159 / DSM 3647 / Goe1 / Go1 / JCM 11833 / OCM 88) (Methanosarcina frisia).